A 33-amino-acid chain; its full sequence is Photosystem II reaction center protein Psb30 (33 aa).

Residues 5 to 25 traverse the membrane as a helical segment; that stretch reads VIAQLTVLSLIVLSGPLVIIL.

This sequence belongs to the Psb30/Ycf12 family. In terms of assembly, PSII is composed of 1 copy each of membrane proteins PsbA, PsbB, PsbC, PsbD, PsbE, PsbF, PsbH, PsbI, PsbJ, PsbK, PsbL, PsbM, PsbT, PsbX, PsbY, PsbZ, Psb30/Ycf12, peripheral proteins of the oxygen-evolving complex and a large number of cofactors. It forms dimeric complexes.

It is found in the plastid. The protein resides in the chloroplast thylakoid membrane. In terms of biological role, a core subunit of photosystem II (PSII), probably helps stabilize the reaction center. In Chlorokybus atmophyticus (Soil alga), this protein is Photosystem II reaction center protein Psb30.